The primary structure comprises 178 residues: MSDISCKKRDDYLEWPEYFMAVAFLSAQRSKDPSSQVGACIVNTENKIVGIGYNGMPNGCSDDLLPWRRTAENKLDTKYPYVCHAELNAIMNKNSADVKGCSMYVALFPCNECAKLIIQAGIKEVIFMSDKYHDSEETTAARLLFKLAGVTFRKFTPKYSKIVIDFDSINSRPSQKPQ.

One can recognise a CMP/dCMP-type deaminase domain in the interval 14 to 145 (EWPEYFMAVA…EETTAARLLF (132 aa)). His84 contacts Zn(2+). The active-site Proton donor is Glu86. Zn(2+) contacts are provided by Cys110 and Cys113. Phosphoserine is present on Ser174.

Belongs to the cytidine and deoxycytidylate deaminase family. Homohexamer. It depends on Zn(2+) as a cofactor.

It carries out the reaction dCMP + H2O + H(+) = dUMP + NH4(+). The catalysed reaction is 5-hydroxymethyl-dCMP + H2O + H(+) = 5-hydroxymethyl-dUMP + NH4(+). With respect to regulation, allosteric enzyme whose activity is greatly influenced by the end products of its metabolic pathway, dCTP and dTTP. In terms of biological role, catalyzes the deamination of dCMP to dUMP, providing the nucleoside monophosphate substrate for the thymidylate synthase/TYMS. Also, part of a nucleotide salvage pathway that eliminates epigenetically modified 5-hydroxymethyl-dCMP (hmdCMP) in a two-step process entailing deamination to cytotoxic 5-hydroxymethyl-dUMP (hmdUMP), followed by its hydrolysis into 5-hydroxymethyluracil (hmU) and 2-deoxy-D-ribose 5-phosphate (deoxyribosephosphate). Catalyzes the first step in that pathway, the deamination of 5-hydroxymethyl-dCMP (hmdCMP). The protein is Deoxycytidylate deaminase of Mus musculus (Mouse).